The following is a 610-amino-acid chain: Zinc metalloproteinase-disintegrin-like BITM06A (610 aa).

Positions 1-20 (MIQVLLVTICLAAFPYQGSS) are cleaved as a signal peptide. Residues 21-189 (IILESGNVND…KKASQLVVTA (169 aa)) constitute a propeptide that is removed on maturation. In terms of domain architecture, Peptidase M12B spans 198–394 (RYVELFIVVD…ENPQCILNEP (197 aa)). Ca(2+)-binding residues include E201 and D285. 3 disulfides stabilise this stretch: C309-C389, C349-C373, and C351-C356. H334 is a binding site for Zn(2+). The active site involves E335. The Zn(2+) site is built by H338 and H344. N372 carries an N-linked (GlcNAc...) asparagine glycan. Ca(2+) is bound by residues C389, N392, V404, N407, L409, E411, E414, and D417. In terms of domain architecture, Disintegrin spans 402–488 (PPVCGNELLE…ECPADVFHKN (87 aa)). Disulfide bonds link C405/C434, C416/C429, C418/C424, C428/C451, C442/C448, C447/C473, C460/C480, C467/C499, C492/C504, C511/C561, C526/C572, C539/C549, C556/C598, and C592/C603. A D/ECD-tripeptide motif is present at residues 466 to 468 (ECD). Residues D468, P469, E471, D483, and V484 each contribute to the Ca(2+) site.

It belongs to the venom metalloproteinase (M12B) family. P-III subfamily. P-IIIa sub-subfamily. As to quaternary structure, monomer. The cofactor is Zn(2+). Expressed by the venom gland.

It localises to the secreted. In terms of biological role, snake venom metalloproteinase that impairs hemostasis in the envenomed animal. This is Zinc metalloproteinase-disintegrin-like BITM06A from Bothrops insularis (Golden lancehead).